A 304-amino-acid polypeptide reads, in one-letter code: Porphobilinogen deaminase (304 aa).

An S-(dipyrrolylmethanemethyl)cysteine modification is found at Cys-240.

It belongs to the HMBS family. Monomer. Dipyrromethane serves as cofactor.

The enzyme catalyses 4 porphobilinogen + H2O = hydroxymethylbilane + 4 NH4(+). It functions in the pathway porphyrin-containing compound metabolism; protoporphyrin-IX biosynthesis; coproporphyrinogen-III from 5-aminolevulinate: step 2/4. In terms of biological role, tetrapolymerization of the monopyrrole PBG into the hydroxymethylbilane pre-uroporphyrinogen in several discrete steps. The chain is Porphobilinogen deaminase from Xanthomonas campestris pv. campestris (strain B100).